The primary structure comprises 793 residues: Protein smoothened (793 aa).

The signal sequence occupies residues 1–30 (MAAGRPVRGPELAPRRLLQLLLLVLLGGRG). The Extracellular portion of the chain corresponds to 31 to 237 (RGAALSGNVT…EAEHQDMHSY (207 aa)). The disordered stretch occupies residues 35–61 (LSGNVTGPGPRSAGGSARRNAPVTSPP). Residue asparagine 38 is glycosylated (N-linked (GlcNAc...) asparagine). Disulfide bonds link cysteine 68–cysteine 182, cysteine 74–cysteine 138, cysteine 82–cysteine 131, cysteine 122–cysteine 158, and cysteine 151–cysteine 173. The 117-residue stretch at 69-185 (GRAAHCEPLR…DHFPEGCPNE (117 aa)) folds into the FZ domain. Residue aspartate 99 participates in cholesterol binding. The N-linked (GlcNAc...) asparagine glycan is linked to asparagine 192. Disulfide bonds link cysteine 197–cysteine 217, cysteine 221–cysteine 299, and cysteine 318–cysteine 394. The chain crosses the membrane as a helical span at residues 238–258 (IAAFGAVTGLCTLFTLATFVA). Residues 259 to 266 (DWRNSNRY) lie on the Cytoplasmic side of the membrane. Residues 267–287 (PAVILFYVNACFFVGSIGWLA) form a helical membrane-spanning segment. At 288 to 318 (QFMDGARREIVCRADGTMRFGEPTSSETLSC) the chain is on the extracellular side. The helical transmembrane segment at 319 to 339 (VIIFVIVYYALMAGVVWFVVL) threads the bilayer. The Cytoplasmic portion of the chain corresponds to 340 to 362 (TYAWHTSFKALGTTYQPLSGKTS). The chain crosses the membrane as a helical span at residues 363–383 (YFHLLTWSLPFVLTVAILAVA). Residues 384 to 406 (QVDGDSVSGICFVGYKNYRYRAG) lie on the Extracellular side of the membrane. Tyrosine 398 contributes to the cholesterol binding site. Residues 407 to 427 (FVLAPIGLVLIVGGYFLIRGV) traverse the membrane as a helical segment. Residues 428–455 (MTLFSIKSNHPGLLSEKAASKINETMLR) lie on the Cytoplasmic side of the membrane. A helical transmembrane segment spans residues 456–476 (LGIFGFLAFGFVLITFSCHFY). At 477-528 (DFFNQAEWERSFRDYVLCQANVTIGLPTKKPIPDCEIKNRPSLLVEKINLFA) the chain is on the extracellular side. An intrachain disulfide couples cysteine 494 to cysteine 511. Residue asparagine 497 is glycosylated (N-linked (GlcNAc...) asparagine). A helical membrane pass occupies residues 529–549 (MFGTGIAMSTWVWTKATLLIW). The interval 542–573 (TKATLLIWRRTWCRLTGHSDDEPKRIKKSKMI) is interaction with BBS5 and BBS7. Residues 550–793 (RRTWCRLTGH…AELLDADSDF (244 aa)) lie on the Cytoplasmic side of the membrane. Phosphoserine occurs at positions 560, 578, and 594. Positions 574-657 (AKAFSKRREL…TPVPPEEQAN (84 aa)) are required for interaction with PRKACA. Positions 585–597 (QNPGQELSFSMHT) are interaction with DLG5. Threonine 597 bears the Phosphothreonine mark. A phosphoserine mark is found at serine 599 and serine 642. Residues threonine 644 and threonine 648 each carry the phosphothreonine modification. A Phosphoserine modification is found at serine 666. The span at 674-684 (GRKKKRRKRKK) shows a compositional bias: basic residues. A disordered region spans residues 674-702 (GRKKKRRKRKKEVCPLGPAPELHHSAPVP).

Belongs to the G-protein coupled receptor Fz/Smo family. In terms of assembly, homodimer. Interacts (via C-terminus) with protein kinase A catalytic subunit PRKACA; interacts with free PRKACA subunits and the interaction leads to sequestration of PRKACA at the membrane, preventing PRKACA-mediated phosphorylation of GLI transcription factors. Interacts with ARRB2. Interacts with KIF7. Interacts with BBS5 and BBS7; the interactions are indicative for the association of SMO with the BBsome complex to facilitate ciliary localization of SMO. Interacts with DLG5 and SDCBP. Interacts with GAS8/DRC4. In terms of processing, phosphorylation by GRK kinases is required for interaction with protein kinase A catalytic subunit PRKACA. In terms of tissue distribution, in embryo, found in the early neural folds and neural tube, pre-somitic mesoderm and somites, developing limb bud, gut, eye, testes, cartilage, muscle, lung, epiglottis, thymus, tongue, jaw, taste buds, teeth, and skin. In adult, found in multiple tissues including heart, brain, liver, lung, skeletal muscle, kidney and testis.

It localises to the cell membrane. The protein resides in the cell projection. It is found in the cilium. Its function is as follows. G protein-coupled receptor which associates with the patched protein (PTCH) to transduce hedgehog protein signaling. Binding of sonic hedgehog (SHH) to its receptor patched prevents inhibition of smoothened (SMO) by patched. When active, SMO binds to and sequesters protein kinase A catalytic subunit PRKACA at the cell membrane, preventing PRKACA-mediated phosphorylation of GLI transcription factors which releases the GLI proteins from PRKACA-mediated inhibition and allows for transcriptional activation of hedgehog pathway target genes. Required for the accumulation of KIF7, GLI2 and GLI3 in the cilia. Interacts with DLG5 at the ciliary base to induce the accumulation of KIF7 and GLI2 at the ciliary tip for GLI2 activation. The chain is Protein smoothened (Smo) from Rattus norvegicus (Rat).